The sequence spans 586 residues: A-type ATP synthase subunit A (586 aa).

238 to 245 serves as a coordination point for ATP; that stretch reads GPFGSGKT.

Belongs to the ATPase alpha/beta chains family. In terms of assembly, has multiple subunits with at least A(3), B(3), C, D, E, F, H, I and proteolipid K(x).

It localises to the cell membrane. The enzyme catalyses ATP + H2O + 4 H(+)(in) = ADP + phosphate + 5 H(+)(out). In terms of biological role, component of the A-type ATP synthase that produces ATP from ADP in the presence of a proton gradient across the membrane. The A chain is the catalytic subunit. In Haloferax volcanii (strain ATCC 29605 / DSM 3757 / JCM 8879 / NBRC 14742 / NCIMB 2012 / VKM B-1768 / DS2) (Halobacterium volcanii), this protein is A-type ATP synthase subunit A.